Here is a 338-residue protein sequence, read N- to C-terminus: uncharacterized protein (338 aa).

The signal sequence occupies residues methionine 1 to alanine 29.

This sequence belongs to the aerolysin family.

This is an uncharacterized protein from Staphylococcus aureus (strain USA300).